Consider the following 294-residue polypeptide: Nucleotide-binding protein Smlt1108 (294 aa).

16–23 (GLSGSGKS) lines the ATP pocket. 69-72 (DVRG) serves as a coordination point for GTP.

The protein belongs to the RapZ-like family.

Its function is as follows. Displays ATPase and GTPase activities. This is Nucleotide-binding protein Smlt1108 from Stenotrophomonas maltophilia (strain K279a).